We begin with the raw amino-acid sequence, 341 residues long: GTPase Obg (341 aa).

The Obg domain maps to 1–159 (MKFVDEALIK…RNLRLELRVL (159 aa)). The segment at 128-150 (TRYKSSVNRSPRQTTPGSPGESR) is disordered. The segment covering 129–144 (RYKSSVNRSPRQTTPG) has biased composition (polar residues). An OBG-type G domain is found at 160-334 (ADVGLLGLPN…LCYALMQLID (175 aa)). Residues 166–173 (GLPNAGKS), 191–195 (FTTLH), 213–216 (DIPG), 283–286 (NKID), and 315–317 (SAI) each bind GTP. Residues Ser173 and Thr193 each coordinate Mg(2+).

It belongs to the TRAFAC class OBG-HflX-like GTPase superfamily. OBG GTPase family. Monomer. The cofactor is Mg(2+).

It localises to the cytoplasm. Functionally, an essential GTPase which binds GTP, GDP and possibly (p)ppGpp with moderate affinity, with high nucleotide exchange rates and a fairly low GTP hydrolysis rate. Plays a role in control of the cell cycle, stress response, ribosome biogenesis and in those bacteria that undergo differentiation, in morphogenesis control. This chain is GTPase Obg, found in Legionella pneumophila subsp. pneumophila (strain Philadelphia 1 / ATCC 33152 / DSM 7513).